Consider the following 174-residue polypeptide: Ubiquitin-fold modifier-conjugating enzyme 1 (174 aa).

Cysteine 119 functions as the Glycyl thioester intermediate in the catalytic mechanism.

This sequence belongs to the ubiquitin-conjugating enzyme family. UFC1 subfamily.

E2-like enzyme which forms an intermediate with UFM1 via a thioester linkage. The sequence is that of Ubiquitin-fold modifier-conjugating enzyme 1 from Arabidopsis thaliana (Mouse-ear cress).